Consider the following 406-residue polypeptide: Argininosuccinate synthase (406 aa).

Ala-9–Ser-17 contacts ATP. Residue Tyr-86 participates in L-citrulline binding. Residue Gly-116 coordinates ATP. Residues Thr-118, Asn-122, and Asp-123 each contribute to the L-aspartate site. Asn-122 lines the L-citrulline pocket. Residues Arg-126, Ser-174, Ser-183, Glu-259, and Tyr-271 each coordinate L-citrulline.

This sequence belongs to the argininosuccinate synthase family. Type 1 subfamily. As to quaternary structure, homotetramer.

The protein resides in the cytoplasm. The catalysed reaction is L-citrulline + L-aspartate + ATP = 2-(N(omega)-L-arginino)succinate + AMP + diphosphate + H(+). It functions in the pathway amino-acid biosynthesis; L-arginine biosynthesis; L-arginine from L-ornithine and carbamoyl phosphate: step 2/3. The sequence is that of Argininosuccinate synthase from Geobacillus kaustophilus (strain HTA426).